Here is a 69-residue protein sequence, read N- to C-terminus: DNA-directed RNA polymerase subunit omega (69 aa).

The protein belongs to the RNA polymerase subunit omega family. As to quaternary structure, the RNAP catalytic core consists of 2 alpha, 1 beta, 1 beta' and 1 omega subunit. When a sigma factor is associated with the core the holoenzyme is formed, which can initiate transcription.

It carries out the reaction RNA(n) + a ribonucleoside 5'-triphosphate = RNA(n+1) + diphosphate. Its function is as follows. Promotes RNA polymerase assembly. Latches the N- and C-terminal regions of the beta' subunit thereby facilitating its interaction with the beta and alpha subunits. The chain is DNA-directed RNA polymerase subunit omega from Geobacter metallireducens (strain ATCC 53774 / DSM 7210 / GS-15).